A 336-amino-acid chain; its full sequence is Adenosine deaminase (336 aa).

Zn(2+) is bound by residues histidine 15 and histidine 17. Substrate is bound by residues histidine 17, aspartate 19, and glycine 172. Histidine 199 is a Zn(2+) binding site. Glutamate 202 serves as the catalytic Proton donor. Aspartate 279 is a binding site for Zn(2+).

It belongs to the metallo-dependent hydrolases superfamily. Adenosine and AMP deaminases family. Adenosine deaminase subfamily. Zn(2+) is required as a cofactor.

The enzyme catalyses adenosine + H2O + H(+) = inosine + NH4(+). It catalyses the reaction 2'-deoxyadenosine + H2O + H(+) = 2'-deoxyinosine + NH4(+). Catalyzes the hydrolytic deamination of adenosine and 2-deoxyadenosine. The polypeptide is Adenosine deaminase (Streptococcus thermophilus (strain ATCC BAA-491 / LMD-9)).